The chain runs to 472 residues: Glutamate--tRNA ligase 2 (472 aa).

The 'HIGH' region motif lies at 12 to 22 (PSPSGLLHLGN). Positions 253–257 (PLSKR) match the 'KMSKS' region motif. Lys256 serves as a coordination point for ATP.

The protein belongs to the class-I aminoacyl-tRNA synthetase family. Glutamate--tRNA ligase type 1 subfamily. Monomer.

It is found in the cytoplasm. The enzyme catalyses tRNA(Glu) + L-glutamate + ATP = L-glutamyl-tRNA(Glu) + AMP + diphosphate. Its function is as follows. Catalyzes the attachment of glutamate to tRNA(Glu) in a two-step reaction: glutamate is first activated by ATP to form Glu-AMP and then transferred to the acceptor end of tRNA(Glu). The chain is Glutamate--tRNA ligase 2 from Nitrosococcus oceani (strain ATCC 19707 / BCRC 17464 / JCM 30415 / NCIMB 11848 / C-107).